The sequence spans 664 residues: ATP-dependent zinc metalloprotease FtsH (664 aa).

Over 1 to 9 (MKQNIKRNW) the chain is Cytoplasmic. The helical transmembrane segment at 10 to 30 (IWILIVMIVIGIILYFSIRNL) threads the bilayer. Residues 31 to 136 (FSTKVAEWSI…KSVATPQPNP (106 aa)) lie on the Extracellular side of the membrane. Residues 137-157 (FLGILISSVPVLILIFVMVWI) traverse the membrane as a helical segment. At 158-664 (YRSQVKMMNG…SLIEKTSKKE (507 aa)) the chain is on the cytoplasmic side. Residue 229-236 (GPPGTGKT) coordinates ATP. Zn(2+) is bound at residue H451. E452 is an active-site residue. Positions 455 and 529 each coordinate Zn(2+). Positions 639 to 649 (IEEKDLSKNSE) are enriched in basic and acidic residues. The tract at residues 639–664 (IEEKDLSKNSEDNNLDSLIEKTSKKE) is disordered.

The protein in the central section; belongs to the AAA ATPase family. In the C-terminal section; belongs to the peptidase M41 family. In terms of assembly, homohexamer. Requires Zn(2+) as cofactor.

It is found in the cell membrane. Functionally, acts as a processive, ATP-dependent zinc metallopeptidase for both cytoplasmic and membrane proteins. Plays a role in the quality control of integral membrane proteins. The polypeptide is ATP-dependent zinc metalloprotease FtsH (Mycoplasmopsis synoviae (strain 53) (Mycoplasma synoviae)).